A 408-amino-acid polypeptide reads, in one-letter code: MAVGEKEHEGTVVESGGEKNDSAVVLSASGEKKTTKRKGLFSRLWNAIFRVRGDDFEKRLKNISKEEATVRNRMKRRSITRRNFIRNLIAFSVFFEVIAVSYAIMTTRDEDLDWKLRSFRILPMFLLPAVAFLLYSSLVGFWRMCDRRDQHTLEKLQAEMLGKINELKERTNYYITQQLIQRYDPDPAAKAAAATVLASKLGAESGLKVFVGDESQLEPTAGKNNAKHSGGLRNRKQTNTRGNSAETTPIHHSDNESNHSGTSERITGTEQNQQMVFEHYNPQEYAAHDGSWISRIAALLVGEDPSQSYALICGNCRMHNGLARKEDFPYITYYCPHCRALNKPKHSEEHSLIAPADTLPKVSLKPMESEVINSSSSTSERGNSPIPLLHTPEIVEEVPETAENETPN.

Disordered regions lie at residues 218-265 and 367-408; these read EPTA…TSER and MESE…ETPN. Over residues 369–379 the composition is skewed to low complexity; the sequence is SEVINSSSSTS. A compositionally biased stretch (acidic residues) spans 394–408; the sequence is IVEEVPETAENETPN.

It to C.elegans C05E11.1.

This is an uncharacterized protein from Arabidopsis thaliana (Mouse-ear cress).